The following is a 296-amino-acid chain: MSPDLTHRSPEELTPEDSQAIGDLARRAARADGVDPLNEESLLALRHRTPGRVHVLAHDQDRLVGYGTLAHGSAEVVTDPDARKAGLGGRLLDALLEHDPELLLWAHGDMDGGRRLAASRGMVPRRPLWRMERPVAGEFSELPPVELPEGISVRPFVAGQDDEAWLRVNSRAFADHAEQGRMTAEDLTARTQEDWFDASGFLLLVDDTRDGEVVGFHWTKVDQLPVGEVYVVGVDPERQGEGLGRVATLVGLHHLADRGVETVELYVDGDNRAAVTTYGRLGFERAAVDVQYGPPV.

N-acetyltransferase domains are found at residues 8–146 and 151–296; these read RSPE…PPVE and ISVR…GPPV. Position 39 (Glu39) interacts with 1D-myo-inositol 2-(L-cysteinylamino)-2-deoxy-alpha-D-glucopyranoside. An acetyl-CoA-binding site is contributed by 76–78; it reads VVT. Residues Glu178, Lys220, and Glu228 each coordinate 1D-myo-inositol 2-(L-cysteinylamino)-2-deoxy-alpha-D-glucopyranoside. Acetyl-CoA contacts are provided by residues 232–234 and 239–245; these read VGV and QGEGLGR. Residue Tyr266 participates in 1D-myo-inositol 2-(L-cysteinylamino)-2-deoxy-alpha-D-glucopyranoside binding.

This sequence belongs to the acetyltransferase family. MshD subfamily. Monomer.

It catalyses the reaction 1D-myo-inositol 2-(L-cysteinylamino)-2-deoxy-alpha-D-glucopyranoside + acetyl-CoA = mycothiol + CoA + H(+). Functionally, catalyzes the transfer of acetyl from acetyl-CoA to desacetylmycothiol (Cys-GlcN-Ins) to form mycothiol. The protein is Mycothiol acetyltransferase of Kytococcus sedentarius (strain ATCC 14392 / DSM 20547 / JCM 11482 / CCUG 33030 / NBRC 15357 / NCTC 11040 / CCM 314 / 541) (Micrococcus sedentarius).